The chain runs to 112 residues: uncharacterized protein (112 aa).

The segment covering 1-11 has biased composition (polar residues); that stretch reads MAESVASSESL. Positions 1–32 are disordered; sequence MAESVASSESLPQMKPEEPESKKSPSREAIPK. The span at 15 to 31 shows a compositional bias: basic and acidic residues; the sequence is KPEEPESKKSPSREAIP. A helical transmembrane segment spans residues 81-101; it reads VVFIFMIAIMSMLVIGLVVCG.

Its subcellular location is the membrane. This is an uncharacterized protein from Encephalitozoon cuniculi (strain GB-M1) (Microsporidian parasite).